The sequence spans 381 residues: uncharacterized protein (381 aa).

Residues 3–23 (GAVAGLVFLAVLVIFAIIVVA) form a helical membrane-spanning segment.

It belongs to the band 7/mec-2 family.

It is found in the membrane. This is an uncharacterized protein from Mycobacterium bovis (strain ATCC BAA-935 / AF2122/97).